Consider the following 184-residue polypeptide: Ribosome-recycling factor (184 aa).

Belongs to the RRF family.

The protein resides in the cytoplasm. Functionally, responsible for the release of ribosomes from messenger RNA at the termination of protein biosynthesis. May increase the efficiency of translation by recycling ribosomes from one round of translation to another. This Oleidesulfovibrio alaskensis (strain ATCC BAA-1058 / DSM 17464 / G20) (Desulfovibrio alaskensis) protein is Ribosome-recycling factor.